Here is a 106-residue protein sequence, read N- to C-terminus: Nucleoid-associated protein Fjoh_2555 (106 aa).

This sequence belongs to the YbaB/EbfC family. Homodimer.

Its subcellular location is the cytoplasm. The protein localises to the nucleoid. Binds to DNA and alters its conformation. May be involved in regulation of gene expression, nucleoid organization and DNA protection. This chain is Nucleoid-associated protein Fjoh_2555, found in Flavobacterium johnsoniae (strain ATCC 17061 / DSM 2064 / JCM 8514 / BCRC 14874 / CCUG 350202 / NBRC 14942 / NCIMB 11054 / UW101) (Cytophaga johnsonae).